The primary structure comprises 347 residues: Selenide, water dikinase (347 aa).

Residue Cys-17 is part of the active site. Residues Lys-20 and 48–50 each bind ATP; that span reads TRD. Asp-51 is a binding site for Mg(2+). Residues Asp-68, Asp-91, and 139-141 each bind ATP; that span reads GHS. Residue Asp-91 coordinates Mg(2+). Asp-227 is a binding site for Mg(2+).

The protein belongs to the selenophosphate synthase 1 family. Class I subfamily. As to quaternary structure, homodimer. Mg(2+) serves as cofactor.

It catalyses the reaction hydrogenselenide + ATP + H2O = selenophosphate + AMP + phosphate + 2 H(+). Synthesizes selenophosphate from selenide and ATP. The chain is Selenide, water dikinase from Shigella flexneri serotype 5b (strain 8401).